The primary structure comprises 110 residues: Cytochrome bo(3) ubiquinol oxidase subunit 4 (110 aa).

At 1–18 the chain is on the cytoplasmic side; sequence MANAHDTHHEGNHGSVKS. A helical membrane pass occupies residues 19–39; sequence YMIGFILSIILTAIPFGLAMS. The Periplasmic portion of the chain corresponds to 40-46; sequence PSLPKNL. Residues 47-67 traverse the membrane as a helical segment; it reads TVLIIVAMAVIQVVVHLVYFL. Topologically, residues 68–78 are cytoplasmic; the sequence is HMDRSKEQRNN. The chain crosses the membrane as a helical span at residues 79–99; the sequence is VWTFLFTTLVIALLVGLSLWI. Over 100–110 the chain is Periplasmic; sequence MFSIHFEMLAK.

The protein belongs to the cytochrome c oxidase bacterial subunit 4 family. In terms of assembly, heterooctamer of two A chains, two B chains, two C chains and two D chains.

It is found in the cell inner membrane. Functionally, cytochrome bo(3) ubiquinol terminal oxidase is the component of the aerobic respiratory chain of E.coli that predominates when cells are grown at high aeration. Has proton pump activity across the membrane in addition to electron transfer, pumping 2 protons/electron. This Pseudomonas putida (Arthrobacter siderocapsulatus) protein is Cytochrome bo(3) ubiquinol oxidase subunit 4 (cyoD).